Reading from the N-terminus, the 130-residue chain is DNA-directed RNA polymerase subunit omega (130 aa).

The segment at Pro80–Glu130 is disordered. Over residues Ala103–Lys114 the composition is skewed to basic and acidic residues.

This sequence belongs to the RNA polymerase subunit omega family. As to quaternary structure, the RNAP catalytic core consists of 2 alpha, 1 beta, 1 beta' and 1 omega subunit. When a sigma factor is associated with the core the holoenzyme is formed, which can initiate transcription.

It carries out the reaction RNA(n) + a ribonucleoside 5'-triphosphate = RNA(n+1) + diphosphate. Functionally, promotes RNA polymerase assembly. Latches the N- and C-terminal regions of the beta' subunit thereby facilitating its interaction with the beta and alpha subunits. This is DNA-directed RNA polymerase subunit omega from Rhodopseudomonas palustris (strain BisB18).